The chain runs to 347 residues: uncharacterized protein (347 aa).

Residues Cys39, His65, Cys95, Cys98, Cys101, Cys109, and Glu152 each coordinate Zn(2+).

The protein belongs to the zinc-containing alcohol dehydrogenase family. Requires Zn(2+) as cofactor.

This is an uncharacterized protein from Escherichia coli (strain K12).